The chain runs to 295 residues: Acetyl-coenzyme A carboxylase carboxyl transferase subunit beta (295 aa).

The tract at residues 1 to 20 is disordered; the sequence is MSWLSKLMPSGIRTENTPAK. Positions 28 to 295 constitute a CoA carboxyltransferase N-terminal domain; that stretch reads LWEKCSNCGS…QPHPQDADAA (268 aa). 4 residues coordinate Zn(2+): cysteine 32, cysteine 35, cysteine 51, and cysteine 54. The segment at 32–54 adopts a C4-type zinc-finger fold; it reads CSNCGSALYGPELEENLEVCPKC.

Belongs to the AccD/PCCB family. Acetyl-CoA carboxylase is a heterohexamer composed of biotin carboxyl carrier protein (AccB), biotin carboxylase (AccC) and two subunits each of ACCase subunit alpha (AccA) and ACCase subunit beta (AccD). Zn(2+) is required as a cofactor.

Its subcellular location is the cytoplasm. The enzyme catalyses N(6)-carboxybiotinyl-L-lysyl-[protein] + acetyl-CoA = N(6)-biotinyl-L-lysyl-[protein] + malonyl-CoA. It participates in lipid metabolism; malonyl-CoA biosynthesis; malonyl-CoA from acetyl-CoA: step 1/1. In terms of biological role, component of the acetyl coenzyme A carboxylase (ACC) complex. Biotin carboxylase (BC) catalyzes the carboxylation of biotin on its carrier protein (BCCP) and then the CO(2) group is transferred by the transcarboxylase to acetyl-CoA to form malonyl-CoA. The sequence is that of Acetyl-coenzyme A carboxylase carboxyl transferase subunit beta from Xanthomonas campestris pv. campestris (strain 8004).